We begin with the raw amino-acid sequence, 479 residues long: Sucrose-6-phosphate hydrolase (479 aa).

Substrate is bound by residues 44–47 (LLND), Gln-63, 106–107 (YS), 166–167 (RD), and Glu-223. Asp-47 is an active-site residue.

This sequence belongs to the glycosyl hydrolase 32 family.

It localises to the cytoplasm. It catalyses the reaction Hydrolysis of terminal non-reducing beta-D-fructofuranoside residues in beta-D-fructofuranosides.. The protein operates within glycan biosynthesis; sucrose metabolism. The chain is Sucrose-6-phosphate hydrolase (scrB) from Streptococcus mutans serotype c (strain ATCC 700610 / UA159).